Consider the following 96-residue polypeptide: Co-chaperonin GroES (96 aa).

The protein belongs to the GroES chaperonin family. As to quaternary structure, heptamer of 7 subunits arranged in a ring. Interacts with the chaperonin GroEL.

Its subcellular location is the cytoplasm. In terms of biological role, together with the chaperonin GroEL, plays an essential role in assisting protein folding. The GroEL-GroES system forms a nano-cage that allows encapsulation of the non-native substrate proteins and provides a physical environment optimized to promote and accelerate protein folding. GroES binds to the apical surface of the GroEL ring, thereby capping the opening of the GroEL channel. This is Co-chaperonin GroES from Paracidovorax citrulli (strain AAC00-1) (Acidovorax citrulli).